The sequence spans 219 residues: GTP-binding protein drn-1 (219 aa).

Residues 37 to 44, 56 to 62, 85 to 89, 146 to 149, and 177 to 178 each bind GTP; these read GAGGVGKS, NENYVPT, DTTGS, NKKD, and AK. The Effector region motif lies at 59 to 67; sequence YVPTIEDTY. Position 216 is a cysteine methyl ester (cysteine 216). Residue cysteine 216 is the site of S-geranylgeranyl cysteine attachment. A propeptide spans 217–219 (removed in mature form); the sequence is HIM.

This sequence belongs to the small GTPase superfamily. Di-Ras family. As to quaternary structure, interacts with epac-1 (via C-terminus). Expressed specifically in neurons including the nerve ring, ventral and dorsal nerve cord motor neurons and tail ganglia.

It localises to the cell membrane. Functionally, displays low GTPase activity and exists predominantly in the GTP-bound form. Together with epac-1, may regulate acetylcholine release at the neuromuscular junctions probably downstream of G-protein gsa-1 and adenylate cyclase acy-1. This chain is GTP-binding protein drn-1, found in Caenorhabditis elegans.